We begin with the raw amino-acid sequence, 163 residues long: Staphylokinase (163 aa).

An N-terminal signal peptide occupies residues 1–27 (MLKRSLLFLTVLLLLFSFSSITNEVSA).

Belongs to the staphylokinase family.

It is found in the secreted. In terms of biological role, potent plasminogen activator that converts plasminogen into plasmin. It forms a 1:1 complex with plasmin, which in turn activates other plasminogen molecules. The sequence is that of Staphylokinase (sak) from Staphylococcus phage phi13 (Bacteriophage phi-13).